Here is a 1072-residue protein sequence, read N- to C-terminus: MLRDGNEGMSTIPGFSQIQFEGFCRFVDQGLAEELHKFPKIEDTDQEIEFQLLVETYQLAEPLIKERDAVYESLTHSSELYVPAGLIWKVGRDMQEQTVFIGNIPLMNSLGTFIVNGIYRIVINQILQSPGIYYSSELDHNGISVYTGTIISDRGGRSELEIDRKARIWARVSRKQKISILVLPSAMGSNLREILDNVCYPEILLYFPNEKEKKKIGSKENAILEFYQQFSCVGGDPVFSESLCKELQKRFFQQRCELGRIGRQNMNQRLNIDIPQNNTFLLPRDVLAATDHLIGMKFGMGTLDDMNHLKNKRIRSVADLLQDQFGLALVRLENVVRGTICGAIRHKFIPTPQNLVTSTPLTTTYESFFGLHPLSQVLDRTNPLTQIVHGRKSSYLGPGGLTGRTASFRIRDIHPSHYGRICPIDTSEGINVGLIGSLAIHARIGDWGSIRSPFYEISERSKEEQMVYLSPRRDEYYMVMVAAGNSLALNQDIQDEQVVPARYRQEFVTIAWEHIDLRSIYPLQYFSIGASLIPFIEHNDANRALMSSNMQRQAVPLSRSEKCIVGTGLERQAALDSGGSAIAQHEGKVIYTDTEKILLSGNGDTISIPLLMYQRSNKNTCMHQKPQVHRDKYVKKGQVLADGAATVGGELALGKNVLVAHMPWEGYNFEDAVLISERLVYGDIYTSFHIRKYEIQTHVTSHGPEKITNEIPHLEAHLLRNLDRNGIVMLGSWVETGDVLVGKLTPQTAKESSYAPEDRLLRVILGIQVSTAKETCLKLPIGGRGRVIDVRWIQKKGASSYNPEKIRVYISQKREIKVGDKVAGRHGNKGIISKILPRQDMPYLQDGTPVDMVFNPLGVPSRMNVGQIFECSLGLAGDLLDRHYRITPFDERYEQEASRKLVFPELYEASKRTANPWVFEPEYPGKSRIFDGRTGDPFEQPVIIGKSYMLKLIHQVDDKIHGRSSGHYALVTQQPLRGRAKQGGQRVGEMEVWALEGFGVAHILQEMLTYKSDHIRARQELLGTTIVGGTIPKPEGAPESFRLLVRELRSLALELKHFLVSEKNFQINRKEA.

The protein belongs to the RNA polymerase beta chain family. In plastids the minimal PEP RNA polymerase catalytic core is composed of four subunits: alpha, beta, beta', and beta''. When a (nuclear-encoded) sigma factor is associated with the core the holoenzyme is formed, which can initiate transcription.

The protein localises to the plastid. It is found in the chloroplast. It catalyses the reaction RNA(n) + a ribonucleoside 5'-triphosphate = RNA(n+1) + diphosphate. Its function is as follows. DNA-dependent RNA polymerase catalyzes the transcription of DNA into RNA using the four ribonucleoside triphosphates as substrates. This Amborella trichopoda protein is DNA-directed RNA polymerase subunit beta.